A 678-amino-acid chain; its full sequence is RxLR effector protein PITG_16705 (678 aa).

A signal peptide spans 1-20; the sequence is MHLFFLTAVAFVITSVSVDA. The RxLR-dEER motif lies at 46–61; the sequence is RLLRKNSTVDLVGEER.

This sequence belongs to the RxLR effector family.

Its subcellular location is the secreted. It is found in the host cytoplasm. In terms of biological role, effector that enhances P.infestans colonization of Nicotiana benthamiana leaves. The protein is RxLR effector protein PITG_16705 of Phytophthora infestans (strain T30-4) (Potato late blight agent).